A 212-amino-acid chain; its full sequence is Urease accessory protein UreG 2 (212 aa).

11–18 serves as a coordination point for GTP; sequence GPVGSGKT.

It belongs to the SIMIBI class G3E GTPase family. UreG subfamily. In terms of assembly, homodimer. UreD, UreF and UreG form a complex that acts as a GTP-hydrolysis-dependent molecular chaperone, activating the urease apoprotein by helping to assemble the nickel containing metallocenter of UreC. The UreE protein probably delivers the nickel.

The protein localises to the cytoplasm. Facilitates the functional incorporation of the urease nickel metallocenter. This process requires GTP hydrolysis, probably effectuated by UreG. The protein is Urease accessory protein UreG 2 of Brucella abortus (strain 2308).